An 80-amino-acid polypeptide reads, in one-letter code: Three-finger toxin MALT0059C (80 aa).

The first 21 residues, 1–21 (MRTLLLTLVVVTIVCLDLGNS), serve as a signal peptide directing secretion. 4 disulfides stabilise this stretch: Cys-24–Cys-41, Cys-35–Cys-60, Cys-64–Cys-72, and Cys-73–Cys-78.

This sequence belongs to the three-finger toxin family. Short-chain subfamily. Expressed by the venom gland.

It localises to the secreted. Functionally, neurotoxin. Blocks muscular nicotinic acetylcholine receptors (nAChR). In Micrurus altirostris (Uruguayan coral snake), this protein is Three-finger toxin MALT0059C.